Consider the following 334-residue polypeptide: Adenosine deaminase (334 aa).

Zn(2+) contacts are provided by H12 and H14. Substrate-binding residues include H14, D16, and G170. H197 is a Zn(2+) binding site. E200 (proton donor) is an active-site residue. Position 278 (D278) interacts with Zn(2+). D279 contacts substrate.

It belongs to the metallo-dependent hydrolases superfamily. Adenosine and AMP deaminases family. Adenosine deaminase subfamily. Zn(2+) is required as a cofactor.

The enzyme catalyses adenosine + H2O + H(+) = inosine + NH4(+). It carries out the reaction 2'-deoxyadenosine + H2O + H(+) = 2'-deoxyinosine + NH4(+). Its function is as follows. Catalyzes the hydrolytic deamination of adenosine and 2-deoxyadenosine. This Yersinia pseudotuberculosis serotype O:1b (strain IP 31758) protein is Adenosine deaminase.